The following is a 298-amino-acid chain: Putative GATA zinc finger domain-containing protein 25 (298 aa).

A coiled-coil region spans residues Asp-4–Gln-37. A disordered region spans residues Gln-148–Glu-227. Positions Glu-183–Glu-202 are enriched in acidic residues. Positions Asn-203–Lys-212 are enriched in basic and acidic residues. Positions Asn-214–Lys-223 are enriched in basic residues. The GATA-type; degenerate zinc-finger motif lies at Cys-229–Cys-256.

In Dictyostelium discoideum (Social amoeba), this protein is Putative GATA zinc finger domain-containing protein 25 (gtaY).